The chain runs to 251 residues: Triosephosphate isomerase (251 aa).

9–11 contacts substrate; the sequence is NWK. The Electrophile role is filled by histidine 95. Glutamate 167 serves as the catalytic Proton acceptor. Substrate is bound by residues glycine 173, serine 212, and 233-234; that span reads GG.

The protein belongs to the triosephosphate isomerase family. In terms of assembly, homodimer.

Its subcellular location is the cytoplasm. The catalysed reaction is D-glyceraldehyde 3-phosphate = dihydroxyacetone phosphate. It participates in carbohydrate biosynthesis; gluconeogenesis. It functions in the pathway carbohydrate degradation; glycolysis; D-glyceraldehyde 3-phosphate from glycerone phosphate: step 1/1. Functionally, involved in the gluconeogenesis. Catalyzes stereospecifically the conversion of dihydroxyacetone phosphate (DHAP) to D-glyceraldehyde-3-phosphate (G3P). The chain is Triosephosphate isomerase from Pseudomonas entomophila (strain L48).